A 172-amino-acid chain; its full sequence is Urease accessory protein UreE (172 aa).

The protein belongs to the UreE family.

The protein localises to the cytoplasm. In terms of biological role, involved in urease metallocenter assembly. Binds nickel. Probably functions as a nickel donor during metallocenter assembly. The protein is Urease accessory protein UreE of Shewanella halifaxensis (strain HAW-EB4).